The chain runs to 364 residues: Endopolygalacturonase B (364 aa).

The first 20 residues, 1 to 20 (MHFLQNSLIAAAMGAALVAA), serve as a signal peptide directing secretion. The propeptide occupies 21 to 29 (APAADLDAR). Cys-32 and Cys-47 are oxidised to a cystine. N-linked (GlcNAc...) asparagine glycosylation occurs at Asn-138. 6 PbH1 repeats span residues 159 to 188 (SDHL…DIGS), 189 to 210 (STYI…AINS), 211 to 231 (GEHI…SIGS), 240 to 261 (VKSV…RIKT), 269 to 291 (VTDV…IVEQ), and 303 to 348 (TNGV…DITG). The active-site Proton donor is the Asp-203. Cysteines 205 and 221 form a disulfide. The active site involves His-225. 2 disulfide bridges follow: Cys-331-Cys-336 and Cys-355-Cys-364.

Belongs to the glycosyl hydrolase 28 family.

It localises to the secreted. It catalyses the reaction (1,4-alpha-D-galacturonosyl)n+m + H2O = (1,4-alpha-D-galacturonosyl)n + (1,4-alpha-D-galacturonosyl)m.. Involved in maceration and soft-rotting of plant tissue. Hydrolyzes the 1,4-alpha glycosidic bonds of de-esterified pectate in the smooth region of the plant cell wall. This Emericella nidulans (strain FGSC A4 / ATCC 38163 / CBS 112.46 / NRRL 194 / M139) (Aspergillus nidulans) protein is Endopolygalacturonase B (pgaB).